Here is a 360-residue protein sequence, read N- to C-terminus: Phospho-N-acetylmuramoyl-pentapeptide-transferase (360 aa).

10 helical membrane passes run 25–45 (RGILGVLTALSLALWLGPWMI), 73–93 (TMGGALILSAIAISTLLWADL), 97–117 (YVWVVLIVTLAFGAIGWVDDY), 134–154 (YFWQSVFGLAAAIFLYKTAPT), 168–188 (LAIPLGAGFIVLTYFVIVGSS), 199–219 (GLAIMPTVMVGGALGIFCYLS), 236–256 (AGELIVFCGALIGAGLGFLWF), 263–283 (VFMGDVGALALGAALGTIAVI), 288–308 (VVLFIMGGVFVMETLSVVIQV), and 338–358 (VIVRFWIITVILVLIGLATLK).

Belongs to the glycosyltransferase 4 family. MraY subfamily. The cofactor is Mg(2+).

It is found in the cell inner membrane. The catalysed reaction is UDP-N-acetyl-alpha-D-muramoyl-L-alanyl-gamma-D-glutamyl-meso-2,6-diaminopimeloyl-D-alanyl-D-alanine + di-trans,octa-cis-undecaprenyl phosphate = di-trans,octa-cis-undecaprenyl diphospho-N-acetyl-alpha-D-muramoyl-L-alanyl-D-glutamyl-meso-2,6-diaminopimeloyl-D-alanyl-D-alanine + UMP. It participates in cell wall biogenesis; peptidoglycan biosynthesis. Catalyzes the initial step of the lipid cycle reactions in the biosynthesis of the cell wall peptidoglycan: transfers peptidoglycan precursor phospho-MurNAc-pentapeptide from UDP-MurNAc-pentapeptide onto the lipid carrier undecaprenyl phosphate, yielding undecaprenyl-pyrophosphoryl-MurNAc-pentapeptide, known as lipid I. This chain is Phospho-N-acetylmuramoyl-pentapeptide-transferase, found in Pseudomonas entomophila (strain L48).